Here is a 308-residue protein sequence, read N- to C-terminus: Spermidine synthase 1 (308 aa).

In terms of domain architecture, PABS spans 17–254 (PGWFSEISPL…GVIGFMLCST (238 aa)). Gln-48 is a binding site for S-adenosyl 3-(methylsulfanyl)propylamine. Position 78 (Tyr-78) interacts with putrescine. S-adenosyl 3-(methylsulfanyl)propylamine is bound by residues Gln-79, Asp-103, Glu-123, 154 to 155 (DG), and Asp-173. The active-site Proton acceptor is Asp-173. Residues 173 to 176 (DSSD) and Tyr-242 each bind putrescine.

This sequence belongs to the spermidine/spermine synthase family.

It carries out the reaction S-adenosyl 3-(methylsulfanyl)propylamine + putrescine = S-methyl-5'-thioadenosine + spermidine + H(+). The protein operates within amine and polyamine biosynthesis; spermidine biosynthesis; spermidine from putrescine: step 1/1. The polypeptide is Spermidine synthase 1 (Datura stramonium (Jimsonweed)).